Here is a 307-residue protein sequence, read N- to C-terminus: Taste receptor type 2 member 41 (307 aa).

The Extracellular portion of the chain corresponds to 1–7 (MQAALMA). Residues 8–28 (FFMLLFSLLSLLGIAANGFIV) form a helical membrane-spanning segment. Residues 29–40 (LVLGREWLRYGR) lie on the Cytoplasmic side of the membrane. A helical transmembrane segment spans residues 41-61 (LLPLDMILISLGASRXCLQLV). At 62–88 (GTVHNFYYSARKVEYSGGLGRQFFHLH) the chain is on the extracellular side. The helical transmembrane segment at 89-109 (WHFLNSATFWFCSWLSVLFCV) threads the bilayer. At 110 to 129 (KIANITHPTFLWLKWRFPGW) the chain is on the cytoplasmic side. Residues 130–150 (VPWLLLGSVLISFIITLLFFW) traverse the membrane as a helical segment. Topologically, residues 151 to 183 (VNYPVYQELLIRKFSGNMTYKWNTRIETYYFPS) are extracellular. Asn-167 carries N-linked (GlcNAc...) asparagine glycosylation. Residues 184-204 (LKLVIWSIPFSVFLVSIMLLI) traverse the membrane as a helical segment. Topologically, residues 205–234 (NSLRRHTQRMQHNGHSLQDPSTQAHTRALK) are cytoplasmic. Residues 235-255 (SLISFLFLYALSFLSLIIDAT) form a helical membrane-spanning segment. Residues 256 to 264 (KFISMQNDF) are Extracellular-facing. A helical membrane pass occupies residues 265 to 285 (YWPWQIAVYLCISVHPFILIF). The Cytoplasmic segment spans residues 286 to 307 (SNLKLRSMFWQVLLLARGFWVA).

The protein belongs to the G-protein coupled receptor T2R family.

The protein resides in the membrane. Its function is as follows. Receptor that may play a role in the perception of bitterness and is gustducin-linked. May play a role in sensing the chemical composition of the gastrointestinal content. The activity of this receptor may stimulate alpha gustducin, mediate PLC-beta-2 activation and lead to the gating of TRPM5. This Gorilla gorilla gorilla (Western lowland gorilla) protein is Taste receptor type 2 member 41 (TAS2R41).